Reading from the N-terminus, the 300-residue chain is Junctional adhesion molecule A (300 aa).

An N-terminal signal peptide occupies residues Met1–Gly26. The Extracellular portion of the chain corresponds to Lys27–Gly238. Ig-like V-type domains follow at residues Gly28–Ser122 and Pro134–Asp230. An N-linked (GlcNAc...) asparagine glycan is attached at Asn42. 2 cysteine pairs are disulfide-bonded: Cys49/Cys108 and Cys152/Cys212. N-linked (GlcNAc...) asparagine glycosylation is present at Asn185. Residues Ile239–Phe259 traverse the membrane as a helical segment. The Cytoplasmic portion of the chain corresponds to Ala260–Leu299. Phosphoserine occurs at positions 282, 285, and 288.

The protein belongs to the immunoglobulin superfamily. As to quaternary structure, interacts with the ninth PDZ domain of MPDZ. Interacts with the first PDZ domain of PARD3. The association between PARD3 and PARD6B probably disrupts this interaction. Interacts with ITGAL (via I-domain). Interacts with CD151.

It is found in the cell junction. Its subcellular location is the tight junction. The protein resides in the cell membrane. Seems to play a role in epithelial tight junction formation. Appears early in primordial forms of cell junctions and recruits PARD3. The association of the PARD6-PARD3 complex may prevent the interaction of PARD3 with JAM1, thereby preventing tight junction assembly. Plays a role in regulating monocyte transmigration involved in integrity of epithelial barrier. Ligand for integrin alpha-L/beta-2 involved in memory T-cell and neutrophil transmigration. Involved in platelet activation. The chain is Junctional adhesion molecule A (F11r) from Mus musculus (Mouse).